Reading from the N-terminus, the 384-residue chain is Lipid-A-disaccharide synthase (384 aa).

It belongs to the LpxB family.

It catalyses the reaction a lipid X + a UDP-2-N,3-O-bis[(3R)-3-hydroxyacyl]-alpha-D-glucosamine = a lipid A disaccharide + UDP + H(+). The protein operates within bacterial outer membrane biogenesis; LPS lipid A biosynthesis. In terms of biological role, condensation of UDP-2,3-diacylglucosamine and 2,3-diacylglucosamine-1-phosphate to form lipid A disaccharide, a precursor of lipid A, a phosphorylated glycolipid that anchors the lipopolysaccharide to the outer membrane of the cell. The sequence is that of Lipid-A-disaccharide synthase (lpxB) from Neisseria meningitidis serogroup A / serotype 4A (strain DSM 15465 / Z2491).